The sequence spans 44 residues: Large ribosomal subunit protein bL34 (44 aa).

It belongs to the bacterial ribosomal protein bL34 family.

In Wolbachia sp. subsp. Brugia malayi (strain TRS), this protein is Large ribosomal subunit protein bL34.